We begin with the raw amino-acid sequence, 705 residues long: MQFIALTSIGIENLLVDELTELGATVSKQTVGSVRFEADSLLAQKVCLSTRFATRVLMLIEEKEGVDDKNSLYNFARSQPWQEWFGPTQTFAVDFNGTNDSLKNTQFSGLVIKDAIVDYFNDLFEQRPNVDKQDANVRVVARLNRYGVSMYIDYSGPRLSERGYRQGQGKAPIKEHLAAALIKRSGWLENVNQPLFDPCCGAGTILIEAAGMARNEAPGLFREGFAFERLPSFRAAKFKELKEELLGNIIDPKLWLIGHDYDAQVLGKAIDNAKRAELDDIIKFKQSDATKLTAVAKLPGVVISNLPYGERIGSMAELVDLHRNLGVGFKKHFNHWKLALLGMDESLFKLLKLVRLKRYKFKNGPLDVELNLYQLDDKQVSLTTDDKKALNFEGSMSFANRLKKNKQGLKNWLKQNEITAYRVYEADIPEYNVAVDIYGDSAVIFEYAAPKEIDEKTSEKRLQDVISLTAEQLKIAPENIAVKVRKKQKGEEQYTPMAKQNRTMVVEEFGAKFKVNLFDYLDTGLFLDHRLMRRYIQENAKDKRFLNLFAYTGTASVHAALGGAKAITTVDLSKTYLKWGQDNFDLNNISNTRYRFEQADCLKWLEHATAQYDLIFLDPPTFSNSKRMKDAFDVQSDHIKLLTWVKKILSPSGTLIFSNNKRGFVMDEVGLIGLGLKAVNISDKTLSPDFKRNKKIHNSWLITHG.

Residues 42 to 154 form the THUMP domain; it reads LAQKVCLSTR…RYGVSMYIDY (113 aa).

Belongs to the methyltransferase superfamily. RlmKL family.

Its subcellular location is the cytoplasm. It carries out the reaction guanosine(2445) in 23S rRNA + S-adenosyl-L-methionine = N(2)-methylguanosine(2445) in 23S rRNA + S-adenosyl-L-homocysteine + H(+). The enzyme catalyses guanosine(2069) in 23S rRNA + S-adenosyl-L-methionine = N(2)-methylguanosine(2069) in 23S rRNA + S-adenosyl-L-homocysteine + H(+). Its function is as follows. Specifically methylates the guanine in position 2445 (m2G2445) and the guanine in position 2069 (m7G2069) of 23S rRNA. This chain is Ribosomal RNA large subunit methyltransferase K/L, found in Pseudoalteromonas translucida (strain TAC 125).